Here is a 341-residue protein sequence, read N- to C-terminus: MWPNGTSLGACFRPVNITLQERRAIASPWFAASFCALGLGSNLLALSVLAGARPGAGPRSSFLALLCGLVLTDFLGLLVTGAIVASQHAALLDWRATDPSCRLCYFMGVAMVFFGLCPLLLGAAMASERFVGITRPFSRPTATSRRAWATVGLVWVAAGALGLLPLLGLGRYSVQYPGSWCFLTLGTQRGDVVFGLIFALLGSASVGLSLLLNTVSVATLCRVYHTREATQRPRDCEVEMMVQLVGIMVVATVCWMPLLVFIMQTLLQTPPVMSFSGQLLRATEHQLLIYLRVATWNQILDPWVYILFRRSVLRRLHPRFSSQLQAVSLRRPPAQAMLSGP.

The Extracellular portion of the chain corresponds to 1–29 (MWPNGTSLGACFRPVNITLQERRAIASPW). 2 N-linked (GlcNAc...) asparagine glycosylation sites follow: Asn-4 and Asn-16. A helical membrane pass occupies residues 30-52 (FAASFCALGLGSNLLALSVLAGA). Residues 53–65 (RPGAGPRSSFLAL) lie on the Cytoplasmic side of the membrane. A helical transmembrane segment spans residues 66 to 86 (LCGLVLTDFLGLLVTGAIVAS). Residues 87–105 (QHAALLDWRATDPSCRLCY) lie on the Extracellular side of the membrane. A disulfide bond links Cys-104 and Cys-181. Residues 106 to 127 (FMGVAMVFFGLCPLLLGAAMAS) traverse the membrane as a helical segment. The Cytoplasmic portion of the chain corresponds to 128–147 (ERFVGITRPFSRPTATSRRA). The chain crosses the membrane as a helical span at residues 148-170 (WATVGLVWVAAGALGLLPLLGLG). At 171–191 (RYSVQYPGSWCFLTLGTQRGD) the chain is on the extracellular side. Residues 192–217 (VVFGLIFALLGSASVGLSLLLNTVSV) form a helical membrane-spanning segment. At 218 to 244 (ATLCRVYHTREATQRPRDCEVEMMVQL) the chain is on the cytoplasmic side. Residues 245–268 (VGIMVVATVCWMPLLVFIMQTLLQ) form a helical membrane-spanning segment. Over 269 to 287 (TPPVMSFSGQLLRATEHQL) the chain is Extracellular. Residues 288–309 (LIYLRVATWNQILDPWVYILFR) form a helical membrane-spanning segment. Residues 310–341 (RSVLRRLHPRFSSQLQAVSLRRPPAQAMLSGP) lie on the Cytoplasmic side of the membrane. Residue Ser-328 is modified to Phosphoserine.

The protein belongs to the G-protein coupled receptor 1 family. In terms of assembly, interacts with RPGRIP1L. Interacts with RACK1; the interaction regulates TBXA2R cell surface expression.

The protein localises to the cell membrane. Receptor for thromboxane A2 (TXA2), a potent stimulator of platelet aggregation. The activity of this receptor is mediated by a G-protein that activates a phosphatidylinositol-calcium second messenger system. In the kidney, the binding of TXA2 to glomerular TP receptors causes intense vasoconstriction. Activates phospholipase C and adenylyl cyclase. This chain is Thromboxane A2 receptor (Tbxa2r), found in Mus musculus (Mouse).